A 328-amino-acid polypeptide reads, in one-letter code: Tetraacyldisaccharide 4'-kinase (328 aa).

ATP is bound at residue 55 to 62 (TAGGNGKT).

The protein belongs to the LpxK family.

It carries out the reaction a lipid A disaccharide + ATP = a lipid IVA + ADP + H(+). Its pathway is glycolipid biosynthesis; lipid IV(A) biosynthesis; lipid IV(A) from (3R)-3-hydroxytetradecanoyl-[acyl-carrier-protein] and UDP-N-acetyl-alpha-D-glucosamine: step 6/6. In terms of biological role, transfers the gamma-phosphate of ATP to the 4'-position of a tetraacyldisaccharide 1-phosphate intermediate (termed DS-1-P) to form tetraacyldisaccharide 1,4'-bis-phosphate (lipid IVA). This chain is Tetraacyldisaccharide 4'-kinase, found in Escherichia coli O127:H6 (strain E2348/69 / EPEC).